A 167-amino-acid chain; its full sequence is Aphrodisin (167 aa).

Positions 1–16 (MVKILVLALVFSLAHA) are cleaved as a signal peptide. A Pyrrolidone carboxylic acid modification is found at Gln-17. 2 disulfide bridges follow: Cys-54/Cys-58 and Cys-73/Cys-165. 2 N-linked (GlcNAc...) asparagine glycosylation sites follow: Asn-57 and Asn-85.

This sequence belongs to the calycin superfamily. Lipocalin family. Expressed in the vagina, uterus, and Bartholin's glands of female hamsters. Secreted in vaginal discharge.

The protein localises to the secreted. Its function is as follows. Acts as an aphrodisiac pheromone, reliably eliciting copulatory behavior from male hamster. The sequence is that of Aphrodisin from Mesocricetus auratus (Golden hamster).